Here is a 2009-residue protein sequence, read N- to C-terminus: ADP-ribosylation factor guanine nucleotide-exchange factor SEC7 (2009 aa).

Residues 1 to 220 are disordered; sequence MSEQNSVVNA…ISLSSNGSNT (220 aa). Over residues 17-33 the composition is skewed to polar residues; the sequence is ISSNVETASSVNPSVKP. A compositionally biased stretch (basic and acidic residues) spans 37 to 53; the sequence is IKEEAKETNGEDQKCKG. Over residues 91–118 the composition is skewed to acidic residues; it reads EGEDGDEDEDEDEDEDEDNGDEDDEDVD. A compositionally biased stretch (low complexity) spans 134–143; the sequence is SVSGESTESS. A compositionally biased stretch (acidic residues) spans 144 to 154; that stretch reads SGEDEESDESD. Over residues 155 to 165 the composition is skewed to low complexity; it reads GNTSNSSSGDE. The segment covering 166–184 has biased composition (acidic residues); that stretch reads SGSEEEEEEEEEEEEEENA. Over residues 194-209 the composition is skewed to polar residues; the sequence is SVPTNDSTAPRSTHTR. Over residues 210–220 the composition is skewed to low complexity; that stretch reads NISLSSNGSNT. A phosphoserine mark is found at Ser212 and Ser215. Thr334 bears the Phosphothreonine mark. Residues Ser447, Ser452, and Ser455 each carry the phosphoserine modification. Residues 653–657 carry the HUS box motif; it reads NYDCN. A compositionally biased stretch (low complexity) spans 771-788; sequence SSARQESRSSLSNDVRSS. Residues 771 to 814 are disordered; it reads SSARQESRSSLSNDVRSSIMTSNDDFKPTYEDEESRSLSSQNID. A Glycyl lysine isopeptide (Lys-Gly) (interchain with G-Cter in ubiquitin) cross-link involves residue Lys797. Ser807 is modified (phosphoserine). One can recognise an SEC7 domain in the interval 824–1010; sequence LKLRKTALSE…LFNEIANNEI (187 aa). Asp940 lines the Mg(2+) pocket. Positions 1017–1220 are HDS1 domain; that stretch reads HQAMLSGDTN…QARVANPRVS (204 aa). A Phosphoserine modification is found at Ser1226. A Phosphothreonine modification is found at Thr1240. The segment covering 1708–1723 has biased composition (polar residues); sequence GRKSSVSHHQTTNDTS. Positions 1708 to 1803 are disordered; it reads GRKSSVSHHQ…KKTKHMKRNE (96 aa). Positions 1724-1751 are enriched in basic and acidic residues; it reads QHSDDDSNDRRENDSNISETVERAHQEE. Phosphoserine is present on residues Ser1741 and Ser1752. Residues 1764-1777 are compositionally biased toward polar residues; the sequence is LNGQTKLNNGNSVP. Residues 1836–1883 form a C2 domain-interacting region (CIR) region; the sequence is FENEDFAHCIPYKEAIRITRLLEKSYEFSRDFNEDYGLRTRLVEARVV.

Interacts with ARF1. Interacts (via C-terminus) with RSP5 ubiquitin ligase.

The protein resides in the cytoplasm. It localises to the golgi apparatus. Its subcellular location is the trans-Golgi network. It is found in the cytoplasmic vesicle. The protein localises to the COPI-coated vesicle membrane. The protein resides in the COPII-coated vesicle membrane. In terms of biological role, guanine exchange factor that acts as an activator of ARF1 at the trans-Golgi network and is thus involved in vesicular budding and traffic between compartments of the Golgi apparatus. Activation of Arf (ADP-ribosylation factor) GTPases is essential for vesicle formation via recruitment of cargo adapters and coat proteins necessary for Golgi trafficking. Also plays an essential role in ER-to-Golgi traffic. SEC7 also acts as an effector of two Rab GTPases, YPT1 and YPT31/32. This is ADP-ribosylation factor guanine nucleotide-exchange factor SEC7 from Saccharomyces cerevisiae (strain ATCC 204508 / S288c) (Baker's yeast).